Reading from the N-terminus, the 84-residue chain is Acyl carrier protein (84 aa).

A Carrier domain is found at 4–80; that stretch reads SETFEKVKKI…EAVDYINNQV (77 aa). S40 bears the O-(pantetheine 4'-phosphoryl)serine mark.

This sequence belongs to the acyl carrier protein (ACP) family. Post-translationally, 4'-phosphopantetheine is transferred from CoA to a specific serine of apo-ACP by AcpS. This modification is essential for activity because fatty acids are bound in thioester linkage to the sulfhydryl of the prosthetic group.

The protein localises to the cytoplasm. It functions in the pathway lipid metabolism; fatty acid biosynthesis. Its function is as follows. Carrier of the growing fatty acid chain in fatty acid biosynthesis. This is Acyl carrier protein from Nostoc sp. (strain PCC 7120 / SAG 25.82 / UTEX 2576).